The following is a 503-amino-acid chain: Probable inactive beta-glucosidase 33 (503 aa).

The signal sequence occupies residues 1 to 30 (MATGELALVSSLFIVVVFLLLGAVAREASA). A beta-D-glucoside-binding positions include Q50, H150, and 195–196 (NQ). C215 and C223 are oxidised to a cystine. A glycan (N-linked (GlcNAc...) asparagine) is linked at N222. The a beta-D-glucoside site is built by Y339 and E399. The Nucleophile role is filled by E399. The N-linked (GlcNAc...) asparagine glycan is linked to N436. A beta-D-glucoside is bound by residues W446, 453–454 (EF), and F462.

It belongs to the glycosyl hydrolase 1 family.

In Oryza sativa subsp. japonica (Rice), this protein is Probable inactive beta-glucosidase 33 (BGLU33).